Reading from the N-terminus, the 460-residue chain is U-box domain-containing protein 9 (460 aa).

A U-box domain is found at Ser73 to Glu147. 3 ARM repeats span residues Thr201–Ile244, Ser248–Ala287, and Asp289–Ile328.

Binds to SD11, SD16, SD17, SD18, SD113, SD129 and SD25. In terms of processing, phosphorylated by SD1-6 and SD1-7.

Its subcellular location is the nucleus. The protein localises to the cell membrane. The catalysed reaction is S-ubiquitinyl-[E2 ubiquitin-conjugating enzyme]-L-cysteine + [acceptor protein]-L-lysine = [E2 ubiquitin-conjugating enzyme]-L-cysteine + N(6)-ubiquitinyl-[acceptor protein]-L-lysine.. It participates in protein modification; protein ubiquitination. Functions as an E3 ubiquitin ligase. May be involved in the abscisic acid-mediated signaling pathway, at least during germination. The chain is U-box domain-containing protein 9 (PUB9) from Arabidopsis thaliana (Mouse-ear cress).